The primary structure comprises 196 residues: Pyridoxal 5'-phosphate synthase subunit PdxT (196 aa).

47-49 (GES) lines the L-glutamine pocket. The active-site Nucleophile is the cysteine 79. Residues arginine 106 and 134–135 (IR) contribute to the L-glutamine site. Active-site charge relay system residues include histidine 170 and glutamate 172.

This sequence belongs to the glutaminase PdxT/SNO family. In the presence of PdxS, forms a dodecamer of heterodimers. Only shows activity in the heterodimer.

It carries out the reaction aldehydo-D-ribose 5-phosphate + D-glyceraldehyde 3-phosphate + L-glutamine = pyridoxal 5'-phosphate + L-glutamate + phosphate + 3 H2O + H(+). The catalysed reaction is L-glutamine + H2O = L-glutamate + NH4(+). The protein operates within cofactor biosynthesis; pyridoxal 5'-phosphate biosynthesis. Catalyzes the hydrolysis of glutamine to glutamate and ammonia as part of the biosynthesis of pyridoxal 5'-phosphate. The resulting ammonia molecule is channeled to the active site of PdxS. In Bacillus licheniformis (strain ATCC 14580 / DSM 13 / JCM 2505 / CCUG 7422 / NBRC 12200 / NCIMB 9375 / NCTC 10341 / NRRL NRS-1264 / Gibson 46), this protein is Pyridoxal 5'-phosphate synthase subunit PdxT.